The chain runs to 407 residues: MKRTFIMVLDSFGIGASKDAEKFGDQGSNTLGHIAEACARGDADIGRKGPLYLPNLSRLGLGKATEESCGTFPAGLDKDADIIGAYAYASELSSGKDTPSGHWEIAGVPVLFDWGYFKDEENSFPQALLDKLVERANLPGYLGNCHSSGTVILDKLGEEHMKTGKPIFYTSADSVFQIACHEETFGLDRLYELCEIAREELTDGGYNIGRVIARPFVGDKAGNFQRTGNRHDLAVEPPAPTILKKLVDEKNGEVVSIGKIADIYANVGITQKVKATGIDALFDATLVEMEKAGDNTIVFTNFVDFDSSYGHRRDVPGYAAALELFDRRLPEMLKRVKNDDILILTADHGCDPTWSGTDHTREHIPVLIYGPKVQPGSLGHRETFADIGQTVAKYFELSPMEYGKSML.

Mn(2+)-binding residues include D10, D306, H311, D347, H348, and H359.

It belongs to the phosphopentomutase family. It depends on Mn(2+) as a cofactor.

The protein localises to the cytoplasm. The enzyme catalyses 2-deoxy-alpha-D-ribose 1-phosphate = 2-deoxy-D-ribose 5-phosphate. The catalysed reaction is alpha-D-ribose 1-phosphate = D-ribose 5-phosphate. Its pathway is carbohydrate degradation; 2-deoxy-D-ribose 1-phosphate degradation; D-glyceraldehyde 3-phosphate and acetaldehyde from 2-deoxy-alpha-D-ribose 1-phosphate: step 1/2. Isomerase that catalyzes the conversion of deoxy-ribose 1-phosphate (dRib-1-P) and ribose 1-phosphate (Rib-1-P) to deoxy-ribose 5-phosphate (dRib-5-P) and ribose 5-phosphate (Rib-5-P), respectively. The sequence is that of Phosphopentomutase from Photorhabdus laumondii subsp. laumondii (strain DSM 15139 / CIP 105565 / TT01) (Photorhabdus luminescens subsp. laumondii).